The sequence spans 898 residues: Filament-like plant protein 7 (898 aa).

Coiled coils occupy residues 23–224 (EVVA…TAEA) and 287–320 (EKIN…LQFS). 3 disordered regions span residues 429-482 (DNRP…DIKS), 693-723 (PGNQ…KLEE), and 777-835 (KSNN…GGNS). A compositionally biased stretch (low complexity) spans 434–459 (SSPICSSDSISATGPVENESNENSSE). Polar residues predominate over residues 460–469 (ATKTSGTVYS). A coiled-coil region spans residues 703 to 764 (VEEEANDKTA…KALTNSKETA (62 aa)). Over residues 808–822 (MKAEDHNTGESKDQK) the composition is skewed to basic and acidic residues.

The protein belongs to the FPP family. Interacts with WPP/MAF proteins.

This is Filament-like plant protein 7 (FPP7) from Arabidopsis thaliana (Mouse-ear cress).